The chain runs to 230 residues: tRNA (guanine-N(7)-)-methyltransferase (230 aa).

4 residues coordinate S-adenosyl-L-methionine: Glu-61, Glu-86, Asn-113, and Asp-136. The active site involves Asp-136. Residues Lys-140, Asp-172, and 208–211 (TKYE) contribute to the substrate site.

Belongs to the class I-like SAM-binding methyltransferase superfamily. TrmB family.

It carries out the reaction guanosine(46) in tRNA + S-adenosyl-L-methionine = N(7)-methylguanosine(46) in tRNA + S-adenosyl-L-homocysteine. Its pathway is tRNA modification; N(7)-methylguanine-tRNA biosynthesis. Functionally, catalyzes the formation of N(7)-methylguanine at position 46 (m7G46) in tRNA. This chain is tRNA (guanine-N(7)-)-methyltransferase, found in Mycobacterium leprae (strain Br4923).